Here is a 66-residue protein sequence, read N- to C-terminus: Conotoxin Bu1.4 (66 aa).

The first 23 residues, Met1 to Ser23, serve as a signal peptide directing secretion. Positions Phe24 to Arg46 are excised as a propeptide. Positions Pro25–Glu48 are disordered. The segment covering Gly32–Val42 has biased composition (acidic residues). 2 disulfides stabilise this stretch: Cys51-Cys57 and Cys52-Cys62. The residue at position 63 (Thr63) is a Threonine amide.

This sequence belongs to the conotoxin A superfamily. In terms of tissue distribution, expressed by the venom duct.

The protein localises to the secreted. This chain is Conotoxin Bu1.4, found in Conus bullatus (Bubble cone).